The following is a 169-amino-acid chain: S-ribosylhomocysteine lyase (169 aa).

His-54, His-58, and Cys-128 together coordinate Fe cation.

The protein belongs to the LuxS family. Homodimer. The cofactor is Fe cation.

It carries out the reaction S-(5-deoxy-D-ribos-5-yl)-L-homocysteine = (S)-4,5-dihydroxypentane-2,3-dione + L-homocysteine. Involved in the synthesis of autoinducer 2 (AI-2) which is secreted by bacteria and is used to communicate both the cell density and the metabolic potential of the environment. The regulation of gene expression in response to changes in cell density is called quorum sensing. Catalyzes the transformation of S-ribosylhomocysteine (RHC) to homocysteine (HC) and 4,5-dihydroxy-2,3-pentadione (DPD). The polypeptide is S-ribosylhomocysteine lyase (Sulfurovum sp. (strain NBC37-1)).